Reading from the N-terminus, the 274-residue chain is Proto-oncogene FRAT1 (274 aa).

4 disordered regions span residues 1–24, 55–107, 132–194, and 232–274; these read MPCRREEEEEAGDEAEGEEDDDSF, AHDR…PGAV, GASA…DDPH, and GPLS…VPGS. Acidic residues predominate over residues 7-23; sequence EEEEAGDEAEGEEDDDS. Positions 191–214 are involved in GSK-3 binding; that stretch reads DDPHRLLQQLVLSGNLIKEAVRRL. A phosphoserine mark is found at S243 and S246.

Belongs to the GSK-3-binding protein family. As to quaternary structure, binds DVL1. Binds GSK-3 and prevent GSK-3-dependent phosphorylation. Phosphorylated. In terms of tissue distribution, highly expressed in testis. Lower level of expression in spleen, thymus and brain.

It is found in the cytoplasm. Positively regulates the Wnt signaling pathway by stabilizing beta-catenin through the association with GSK-3. May play a role in tumor progression and collaborate with PIM1 and MYC in lymphomagenesis. The sequence is that of Proto-oncogene FRAT1 (Frat1) from Mus musculus (Mouse).